Reading from the N-terminus, the 485-residue chain is MNEENIDGTNGCSKVRTGTQNEAALLALMEKTGYNMVQENGQRKFGGPPPGWEGPPPPRGCEVFVGKIPRDMYEDELVPVFERAGKIYEFRLMMEFSGENRGYAFVMYTTKEEAQLAIRILNNYEIRPGKFIGVCVSLDNCRLFIGAIPKEKKKEEILDEMKKVTEGVVDVIVYPSATDKTKNRGFAFVEYESHRAAAMARRKLIPGTFQLWGHTIQVDWADPEKEVDEETMQRVKVLYVRNLMISTTEETIKAEFNKFKPGAVERVKKLRDYAFVHFFNREDAVAAMSVMNGKCIDGASIEVTLAKPVNKENTWRQHLNGQISPNSENLIVFANKEESHPKTLGKLPTLPARLNGQHSPSPPEVERCTYPFYPGTKLTPISMYSLKSNHFNSAVMHLDYYCNKNNWAPPEYYLYSTTSQDGKVLLVYKIVIPAIANGSQSYFMPDKLCTTLEDAKELAAQFTLLHLDRERNLFSLDLCRRIWRK.

RRM domains follow at residues 61-139 (CEVF…VSLD), 141-223 (CRLF…WADP), and 236-308 (KVLY…LAKP).

In terms of assembly, interacts with YTHDC2, MEIOC, MOV10, CNOT6L, DDX4, UPF1 and PABPC1.

It localises to the cytoplasm. Its function is as follows. Essential for male and female fertility, playing a crucial role in regulating germ cell development by ensuring the proper progression of meiosis prophase I. Regulates mitotic-to-meiotic transition in spermatogenesis by forming a complex with MEIOC and YTHDC2 which recognizes and down-regulates mitotic transcripts for a successful meiotic entry. Required for normal synaptonemal complex formation during meiosis, binding meiotic cohesin subunit mRNAs containing GCCUAU/GUUCGA motifs in their 3'UTRs regions and positively regulating their translation. Required for spermatogonial differentiation in both developing and adult testis. The protein is Probable RNA-binding protein 46 (RBM46) of Macaca fascicularis (Crab-eating macaque).